A 568-amino-acid chain; its full sequence is Proline--tRNA ligase (568 aa).

The protein belongs to the class-II aminoacyl-tRNA synthetase family. ProS type 1 subfamily. In terms of assembly, homodimer.

Its subcellular location is the cytoplasm. The catalysed reaction is tRNA(Pro) + L-proline + ATP = L-prolyl-tRNA(Pro) + AMP + diphosphate. Catalyzes the attachment of proline to tRNA(Pro) in a two-step reaction: proline is first activated by ATP to form Pro-AMP and then transferred to the acceptor end of tRNA(Pro). As ProRS can inadvertently accommodate and process non-cognate amino acids such as alanine and cysteine, to avoid such errors it has two additional distinct editing activities against alanine. One activity is designated as 'pretransfer' editing and involves the tRNA(Pro)-independent hydrolysis of activated Ala-AMP. The other activity is designated 'posttransfer' editing and involves deacylation of mischarged Ala-tRNA(Pro). The misacylated Cys-tRNA(Pro) is not edited by ProRS. This Halorhodospira halophila (strain DSM 244 / SL1) (Ectothiorhodospira halophila (strain DSM 244 / SL1)) protein is Proline--tRNA ligase.